Consider the following 437-residue polypeptide: Cobyrinate a,c-diamide synthase (437 aa).

The GATase cobBQ-type domain maps to 241-430 (KIAVAKDEAF…AHVHFFGNLD (190 aa)). C323 (nucleophile) is an active-site residue.

This sequence belongs to the CobB/CbiA family. Mg(2+) serves as cofactor.

It catalyses the reaction cob(II)yrinate + 2 L-glutamine + 2 ATP + 2 H2O = cob(II)yrinate a,c diamide + 2 L-glutamate + 2 ADP + 2 phosphate + 2 H(+). It functions in the pathway cofactor biosynthesis; adenosylcobalamin biosynthesis; cob(II)yrinate a,c-diamide from sirohydrochlorin (anaerobic route): step 10/10. Catalyzes the ATP-dependent amidation of the two carboxylate groups at positions a and c of cobyrinate, using either L-glutamine or ammonia as the nitrogen source. This chain is Cobyrinate a,c-diamide synthase, found in Clostridium acetobutylicum (strain ATCC 824 / DSM 792 / JCM 1419 / IAM 19013 / LMG 5710 / NBRC 13948 / NRRL B-527 / VKM B-1787 / 2291 / W).